Consider the following 561-residue polypeptide: Liver carboxylesterase B-1 (561 aa).

The N-terminal stretch at M1–G18 is a signal peptide. N79 is a glycosylation site (N-linked (GlcNAc...) asparagine). Cysteines 87 and 116 form a disulfide. S221 acts as the Acyl-ester intermediate in catalysis. C273 and C284 form a disulfide bridge. Residues E353 and H466 each act as charge relay system in the active site. The Prevents secretion from ER signature appears at H558–L561.

It belongs to the type-B carboxylesterase/lipase family. As to quaternary structure, monomer.

Its subcellular location is the endoplasmic reticulum lumen. The enzyme catalyses a carboxylic ester + H2O = an alcohol + a carboxylate + H(+). Functionally, involved in the detoxification of xenobiotics and in the activation of ester and amide prodrugs. In Rattus norvegicus (Rat), this protein is Liver carboxylesterase B-1.